We begin with the raw amino-acid sequence, 222 residues long: NADH dehydrogenase [ubiquinone] iron-sulfur protein 8-A, mitochondrial (222 aa).

4Fe-4S ferredoxin-type domains are found at residues 114 to 143 (RRYP…IEAE) and 153 to 182 (TRYD…EGPN). Cys-123, Cys-126, Cys-129, Cys-133, Cys-162, Cys-165, Cys-168, and Cys-172 together coordinate [4Fe-4S] cluster.

The protein belongs to the complex I 23 kDa subunit family. Complex I is composed of at least 49 different subunits. This is a component of the iron-sulfur (IP) fragment of the enzyme. Requires [4Fe-4S] cluster as cofactor.

Its subcellular location is the mitochondrion. The catalysed reaction is a ubiquinone + NADH + 5 H(+)(in) = a ubiquinol + NAD(+) + 4 H(+)(out). In terms of biological role, core subunit of the mitochondrial membrane respiratory chain NADH dehydrogenase (Complex I) that is believed to belong to the minimal assembly required for catalysis. Complex I functions in the transfer of electrons from NADH to the respiratory chain. The immediate electron acceptor for the enzyme is believed to be ubiquinone. May donate electrons to ubiquinone. This Arabidopsis thaliana (Mouse-ear cress) protein is NADH dehydrogenase [ubiquinone] iron-sulfur protein 8-A, mitochondrial.